An 85-amino-acid chain; its full sequence is Small ribosomal subunit protein bS16 (85 aa).

Belongs to the bacterial ribosomal protein bS16 family.

This chain is Small ribosomal subunit protein bS16, found in Rubrobacter xylanophilus (strain DSM 9941 / JCM 11954 / NBRC 16129 / PRD-1).